A 469-amino-acid chain; its full sequence is D-3-phosphoglycerate dehydrogenase 1 (469 aa).

Phosphoserine is present on residues S22, S29, and S33. NAD(+) contacts are provided by residues H208–I209, D228, A285–R287, and D311. Residue R287 is part of the active site. E316 is a catalytic residue. Residue H347 is the Proton donor of the active site. Residue H347 to G350 coordinates NAD(+). The ACT domain maps to R399 to Y469.

Belongs to the D-isomer specific 2-hydroxyacid dehydrogenase family.

The enzyme catalyses (2R)-3-phosphoglycerate + NAD(+) = 3-phosphooxypyruvate + NADH + H(+). The catalysed reaction is (R)-2-hydroxyglutarate + NAD(+) = 2-oxoglutarate + NADH + H(+). It participates in amino-acid biosynthesis; L-serine biosynthesis; L-serine from 3-phospho-D-glycerate: step 1/3. Its function is as follows. Catalyzes the reversible oxidation of 3-phospho-D-glycerate to 3-phosphonooxypyruvate, the first step of the phosphorylated L-serine biosynthesis pathway. Also catalyzes the reversible oxidation of 2-hydroxyglutarate to 2-oxoglutarate. The sequence is that of D-3-phosphoglycerate dehydrogenase 1 (SER3) from Saccharomyces cerevisiae (strain ATCC 204508 / S288c) (Baker's yeast).